A 66-amino-acid chain; its full sequence is Large ribosomal subunit protein bL35 (66 aa).

Basic residues-rich tracts occupy residues 1–15 and 27–40; these read MPKL…KRFK and AGKR…TKKQ. The disordered stretch occupies residues 1 to 40; the sequence is MPKLKTKSGAKKRFKVTGTGKVMSAHAGKRHGMIKRTKKQ.

The protein belongs to the bacterial ribosomal protein bL35 family.

This is Large ribosomal subunit protein bL35 from Rhodopseudomonas palustris (strain BisA53).